We begin with the raw amino-acid sequence, 377 residues long: Putative F-box protein At1g70380 (377 aa).

One can recognise an F-box domain in the interval 3–48; the sequence is NTSFETLALDMQIEILARLPLKYLMRCMCVSKKWASLIRGEDFRSA.

The protein is Putative F-box protein At1g70380 of Arabidopsis thaliana (Mouse-ear cress).